We begin with the raw amino-acid sequence, 309 residues long: Porphobilinogen deaminase (309 aa).

The residue at position 242 (cysteine 242) is an S-(dipyrrolylmethanemethyl)cysteine.

It belongs to the HMBS family. In terms of assembly, monomer. Dipyrromethane is required as a cofactor.

It carries out the reaction 4 porphobilinogen + H2O = hydroxymethylbilane + 4 NH4(+). It functions in the pathway porphyrin-containing compound metabolism; protoporphyrin-IX biosynthesis; coproporphyrinogen-III from 5-aminolevulinate: step 2/4. Its function is as follows. Tetrapolymerization of the monopyrrole PBG into the hydroxymethylbilane pre-uroporphyrinogen in several discrete steps. In Legionella pneumophila subsp. pneumophila (strain Philadelphia 1 / ATCC 33152 / DSM 7513), this protein is Porphobilinogen deaminase.